We begin with the raw amino-acid sequence, 491 residues long: COP9 signalosome complex subunit 1 (491 aa).

The 163-residue stretch at 269–431 (CLLLASFDHC…KILYARDVDQ (163 aa)) folds into the PCI domain. Residues 465–491 (HVKSPPREGSQGELTPANSQSRMSTNM) are disordered. A phosphoserine mark is found at serine 468 and serine 474. The span at 476 to 491 (GELTPANSQSRMSTNM) shows a compositional bias: polar residues. Residue threonine 479 is modified to Phosphothreonine. Phosphoserine is present on serine 483.

This sequence belongs to the CSN1 family. As to quaternary structure, component of the CSN complex, composed of COPS1/GPS1, COPS2, COPS3, COPS4, COPS5, COPS6, COPS7 (COPS7A or COPS7B), COPS8 and COPS9 isoform 1. In the complex, it probably interacts directly with COPS2, COPS3, COPS4 and COPS5. Interacts directly with inositol kinase ITPK1. Interacts with CAPN8. Interacts with USP48. Interacts with ASB4; this interaction negatively regulates GPS1. As to expression, widely expressed.

Its subcellular location is the cytoplasm. It localises to the nucleus. In terms of biological role, essential component of the COP9 signalosome complex (CSN), a complex involved in various cellular and developmental processes. The CSN complex is an essential regulator of the ubiquitin (Ubl) conjugation pathway by mediating the deneddylation of the cullin subunits of SCF-type E3 ligase complexes, leading to decrease the Ubl ligase activity of SCF-type complexes such as SCF, CSA or DDB2. The complex is also involved in phosphorylation of p53/TP53, c-jun/JUN, IkappaBalpha/NFKBIA, ITPK1 and IRF8/ICSBP, possibly via its association with CK2 and PKD kinases. CSN-dependent phosphorylation of TP53 and JUN promotes and protects degradation by the Ubl system, respectively. Suppresses G-protein- and mitogen-activated protein kinase-mediated signal transduction. This chain is COP9 signalosome complex subunit 1 (GPS1), found in Homo sapiens (Human).